The chain runs to 441 residues: Transcriptional regulatory protein ZraR (441 aa).

The Response regulatory domain occupies 7 to 121 (DILVVDDDIS…NLQATLEKAL (115 aa)). The residue at position 56 (D56) is a 4-aspartylphosphate. Positions 141–370 (MVGKSPAMQH…LENAVERAVV (230 aa)) constitute a Sigma-54 factor interaction domain. Positions 172, 173, 329, and 359 each coordinate ATP. The segment at residues 421–440 (KTEAARQLGITRKTLLAKLS) is a DNA-binding region (H-T-H motif).

In terms of assembly, monomer. In terms of processing, phosphorylated by ZraS.

Its subcellular location is the cytoplasm. Activity of the ZraS/ZraR two-component system is repressed by the zinc-bound form of ZraP, which probably interacts with the periplasmic region of ZraS. Part of the Zra signaling pathway, an envelope stress response (ESR) system composed of the periplasmic accessory protein ZraP, the histidine kinase ZraS and the transcriptional regulator ZraR. The ZraPSR system contributes to antibiotic resistance and is important for membrane integrity in the presence of membrane-targeting biocides. ZraR is a member of the two-component regulatory system ZraS/ZraR. When activated by ZraS, acts in conjunction with sigma-54 to regulate the expression of zraP in the presence of high Zn(2+) or Pb(2+) concentrations. Also positively autoregulates the expression of the zraSR operon. Binds to a region within the zraP-zraSR intergenic region that is characterized by two inverted repeats separated by a 14 bp spacer. In addition, controls a regulon of genes of diverse functions that may be critical to maintain envelope integrity and cell survival under stressful conditions. The system has no direct role in zinc or copper resistance. In Escherichia coli (strain K12), this protein is Transcriptional regulatory protein ZraR.